The following is a 283-amino-acid chain: Transcription factor bHLH104 (283 aa).

Residues 96–134 are disordered; it reads VEINSGSSGGAVKEEQEHLDDDCSRKRARTGSCSRGGGT. Residues 107–120 are compositionally biased toward basic and acidic residues; sequence VKEEQEHLDDDCSR. A bHLH domain is found at 130 to 181; the sequence is RGGGTKACRERLRREKLNERFMDLSSVLEPGRTPKTDKPAILDDAIRILNQL.

Homodimer. Interacts with BTS and BHLH47/PYE.

Its subcellular location is the nucleus. In Arabidopsis thaliana (Mouse-ear cress), this protein is Transcription factor bHLH104 (BHLH104).